A 381-amino-acid polypeptide reads, in one-letter code: Succinyl-diaminopimelate desuccinylase (381 aa).

Position 68 (His68) interacts with Zn(2+). Asp70 is a catalytic residue. Asp101 lines the Zn(2+) pocket. The Proton acceptor role is filled by Glu135. Positions 136, 164, and 350 each coordinate Zn(2+).

Belongs to the peptidase M20A family. DapE subfamily. In terms of assembly, homodimer. The cofactor is Zn(2+). Requires Co(2+) as cofactor.

The enzyme catalyses N-succinyl-(2S,6S)-2,6-diaminopimelate + H2O = (2S,6S)-2,6-diaminopimelate + succinate. The protein operates within amino-acid biosynthesis; L-lysine biosynthesis via DAP pathway; LL-2,6-diaminopimelate from (S)-tetrahydrodipicolinate (succinylase route): step 3/3. Catalyzes the hydrolysis of N-succinyl-L,L-diaminopimelic acid (SDAP), forming succinate and LL-2,6-diaminopimelate (DAP), an intermediate involved in the bacterial biosynthesis of lysine and meso-diaminopimelic acid, an essential component of bacterial cell walls. This is Succinyl-diaminopimelate desuccinylase from Neisseria meningitidis serogroup C (strain 053442).